A 371-amino-acid chain; its full sequence is Cytochrome b (371 aa).

A run of 4 helical transmembrane segments spans residues 25–45, 69–90, 105–125, and 170–190; these read FGSMLLACSSMQVLTGFFLAV, WMMQNLHAIGASMFFICIYIHI, WLSGTTLLIMLMATAFFGYVL, and FFALHFILPFGIISLSSLHIM. His75 and His89 together coordinate heme b. Heme b-binding residues include His174 and His188. A ubiquinone is bound at residue His193. 4 helical membrane-spanning segments follow: residues 218–238, 280–300, 312–332, and 339–358; these read YKDLLMLSLMVLMLLMTVSFL, LWGALALAMSITILLTVPFTH, IMQLMFWTLVATFMVITWAAT, and FTMISQIASTIYFLFLIMNP.

It belongs to the cytochrome b family. As to quaternary structure, the cytochrome bc1 complex contains 3 respiratory subunits (MT-CYB, CYC1 and UQCRFS1), 2 core proteins (UQCRC1 and UQCRC2) and probably 6 low-molecular weight proteins. Heme b serves as cofactor.

It is found in the mitochondrion inner membrane. Component of the ubiquinol-cytochrome c reductase complex (complex III or cytochrome b-c1 complex) that is part of the mitochondrial respiratory chain. The b-c1 complex mediates electron transfer from ubiquinol to cytochrome c. Contributes to the generation of a proton gradient across the mitochondrial membrane that is then used for ATP synthesis. The polypeptide is Cytochrome b (MT-CYB) (Eryx miliaris nogaiorum (Black sand boa)).